A 260-amino-acid polypeptide reads, in one-letter code: GTP cyclohydrolase FolE2 (260 aa).

This sequence belongs to the GTP cyclohydrolase IV family.

It catalyses the reaction GTP + H2O = 7,8-dihydroneopterin 3'-triphosphate + formate + H(+). Its pathway is cofactor biosynthesis; 7,8-dihydroneopterin triphosphate biosynthesis; 7,8-dihydroneopterin triphosphate from GTP: step 1/1. Functionally, converts GTP to 7,8-dihydroneopterin triphosphate. The protein is GTP cyclohydrolase FolE2 of Desulfosudis oleivorans (strain DSM 6200 / JCM 39069 / Hxd3) (Desulfococcus oleovorans).